The following is a 149-amino-acid chain: Calmodulin (149 aa).

N-acetylalanine is present on Ala2. EF-hand domains follow at residues 8–43 (EQIAEFKEAFSLFDKDGDGTITTKELGTVMRSLGQN), 44–79 (PTEAELQDMINEVDADGNGTIDFPEFLTMMARKMKD), 81–116 (DSEEEIREAFRVFDKDGNGFISAAELRHVMTNLGEK), and 117–149 (LTDEEVDEMIREADVDGDGQVNYEEFVNMMTNK). Residues Asp21, Asp23, Asp25, Thr27, Glu32, Asp57, Asp59, Asn61, Thr63, Glu68, Asp94, Asp96, Asn98, and Glu105 each contribute to the Ca(2+) site. An N6,N6,N6-trimethyllysine modification is found at Lys116. Positions 130, 132, 134, 136, and 141 each coordinate Ca(2+).

Belongs to the calmodulin family.

Calmodulin mediates the control of a large number of enzymes, ion channels and other proteins by Ca(2+). Among the enzymes to be stimulated by the calmodulin-Ca(2+) complex are a number of protein kinases and phosphatases. The protein is Calmodulin of Ciona intestinalis (Transparent sea squirt).